The primary structure comprises 70 residues: Cold shock-like protein CspI (70 aa).

One can recognise a CSD domain in the interval 7-67; it reads GLVKWFNPEK…GPKGPAAVHV (61 aa).

The protein resides in the cytoplasm. This Escherichia coli O6:H1 (strain CFT073 / ATCC 700928 / UPEC) protein is Cold shock-like protein CspI (cspI).